The sequence spans 410 residues: NADH-quinone oxidoreductase subunit H (410 aa).

9 helical membrane passes run 16 to 36 (LILAKSLGVFVFLLLTVLAAI), 84 to 104 (WIYLAAPVISVIPAFMAFAVI), 124 to 144 (LPVAVLYILAVTSIGVYGIVL), 165 to 185 (VISYEIAMALSFVAVFIYAGT), 198 to 218 (VWFIFLLLPSFLVYLTSMVGE), 260 to 280 (VSALATTLFLGGWHAPWPISI), 288 to 308 (WWPLLWFTAKVWLFLFFFMWL), 320 to 340 (FMRLGWKLLIPVSLAWIAIVA), and 353 to 373 (WVTALIGVAGVAAILASLLAW). The interval 384–410 (SHSPPAQSSDHGAFPVPPLPVKEPADA) is disordered.

The protein belongs to the complex I subunit 1 family. In terms of assembly, NDH-1 is composed of 14 different subunits. Subunits NuoA, H, J, K, L, M, N constitute the membrane sector of the complex.

It localises to the cell membrane. It carries out the reaction a quinone + NADH + 5 H(+)(in) = a quinol + NAD(+) + 4 H(+)(out). NDH-1 shuttles electrons from NADH, via FMN and iron-sulfur (Fe-S) centers, to quinones in the respiratory chain. The immediate electron acceptor for the enzyme in this species is believed to be menaquinone. Couples the redox reaction to proton translocation (for every two electrons transferred, four hydrogen ions are translocated across the cytoplasmic membrane), and thus conserves the redox energy in a proton gradient. The sequence is that of NADH-quinone oxidoreductase subunit H from Mycolicibacterium gilvum (strain PYR-GCK) (Mycobacterium gilvum (strain PYR-GCK)).